The chain runs to 509 residues: uncharacterized protein (509 aa).

The RNase NYN domain occupies 358-480; that stretch reads RRIVIIDAIS…IIPFIVENGE (123 aa).

This is an uncharacterized protein from Methanocaldococcus jannaschii (strain ATCC 43067 / DSM 2661 / JAL-1 / JCM 10045 / NBRC 100440) (Methanococcus jannaschii).